The primary structure comprises 279 residues: Isopentenyl-diphosphate delta-isomerase idi1 (279 aa).

Lys-78 lines the substrate pocket. Positions 82 and 93 each coordinate Mg(2+). The region spanning 91–249 (LLHRAFSVFL…GLKFTPWFKL (159 aa)) is the Nudix hydrolase domain. Residues Gln-111 and Lys-116 each contribute to the substrate site. Residue Cys-128 is part of the active site. Ser-129 serves as a coordination point for substrate. The Nudix box signature appears at 129–162 (SHPLGIPGETGAELDAAVLGVKRAAQRKLDQELG). Residues Glu-191 and Glu-193 each coordinate Mg(2+). Glu-193 is an active-site residue.

It belongs to the IPP isomerase type 1 family. The cofactor is Mg(2+).

The catalysed reaction is isopentenyl diphosphate = dimethylallyl diphosphate. It functions in the pathway isoprenoid biosynthesis; dimethylallyl diphosphate biosynthesis; dimethylallyl diphosphate from isopentenyl diphosphate: step 1/1. Its function is as follows. Isopentenyl-diphosphate delta-isomerase; part of the second module of ergosterol biosynthesis pathway that includes the middle steps of the pathway. Idi1 catalyzes the 1,3-allylic rearrangement of isopentenyl (IPP) to its highly electrophilic allylic isomer, dimethylallyl diphosphate (DMAPP). The second module is carried out in the vacuole and involves the formation of farnesyl diphosphate, which is also an important intermediate in the biosynthesis of ubiquinone, dolichol, heme and prenylated proteins. Activity by the mevalonate kinase erg12 (AFUA_4G07780) first converts mevalonate into 5-phosphomevalonate. 5-phosphomevalonate is then further converted to 5-diphosphomevalonate by the phosphomevalonate kinase erg8 (AFUA_5G10680). The diphosphomevalonate decarboxylase mvd1 (AFUA_4G07130) then produces isopentenyl diphosphate. The isopentenyl-diphosphate delta-isomerase idi1 (AFUA_6G11160) then catalyzes the 1,3-allylic rearrangement of the homoallylic substrate isopentenyl (IPP) to its highly electrophilic allylic isomer, dimethylallyl diphosphate (DMAPP). Finally the farnesyl diphosphate synthase erg20 (AFUA_5G02450) catalyzes the sequential condensation of isopentenyl pyrophosphate with dimethylallyl pyrophosphate, and then with the resultant geranylpyrophosphate to the ultimate product farnesyl pyrophosphate. This is Isopentenyl-diphosphate delta-isomerase idi1 from Aspergillus fumigatus (strain ATCC MYA-4609 / CBS 101355 / FGSC A1100 / Af293) (Neosartorya fumigata).